Here is a 90-residue protein sequence, read N- to C-terminus: ESAT-6-like protein EsxE (90 aa).

The protein belongs to the WXG100 family. ESAT-6 subfamily.

The protein resides in the secreted. This chain is ESAT-6-like protein EsxE, found in Mycobacterium tuberculosis (strain CDC 1551 / Oshkosh).